A 120-amino-acid chain; its full sequence is MFILKGYDSFLVFLIIACLIPVLALSASKLVRPKFGGPEKYTTYESGIEPMGEAWVQFNIRYYMFALVFVIFDVETVFLYPWAVSFAQMGFISFLEALVFLSILIVGLVYAWRKGALEWS.

Helical transmembrane passes span 10-30 (FLVF…ASKL), 64-84 (MFAL…PWAV), and 89-109 (MGFI…VGLV).

The protein belongs to the complex I subunit 3 family. As to quaternary structure, NDH is composed of at least 16 different subunits, 5 of which are encoded in the nucleus.

It is found in the plastid. The protein localises to the chloroplast thylakoid membrane. The catalysed reaction is a plastoquinone + NADH + (n+1) H(+)(in) = a plastoquinol + NAD(+) + n H(+)(out). It catalyses the reaction a plastoquinone + NADPH + (n+1) H(+)(in) = a plastoquinol + NADP(+) + n H(+)(out). In terms of biological role, NDH shuttles electrons from NAD(P)H:plastoquinone, via FMN and iron-sulfur (Fe-S) centers, to quinones in the photosynthetic chain and possibly in a chloroplast respiratory chain. The immediate electron acceptor for the enzyme in this species is believed to be plastoquinone. Couples the redox reaction to proton translocation, and thus conserves the redox energy in a proton gradient. This Chlorokybus atmophyticus (Soil alga) protein is NAD(P)H-quinone oxidoreductase subunit 3, chloroplastic.